Here is a 758-residue protein sequence, read N- to C-terminus: Putative transcriptional regulatory protein YJL206C (758 aa).

The segment at residues 47 to 73 (CIACRKRKVRCSGNIPCRLCQTNSYEC) is a DNA-binding region (zn(2)-C6 fungal-type).

Belongs to the ASG1 family.

Its subcellular location is the nucleus. This Saccharomyces cerevisiae (strain ATCC 204508 / S288c) (Baker's yeast) protein is Putative transcriptional regulatory protein YJL206C.